The chain runs to 122 residues: Small ribosomal subunit protein uS13 (122 aa).

Residues 95–122 form a disordered region; that stretch reads GLPVRGQRTKTNARTRKGPKKTIAGKKK.

This sequence belongs to the universal ribosomal protein uS13 family. In terms of assembly, part of the 30S ribosomal subunit. Forms a loose heterodimer with protein S19. Forms two bridges to the 50S subunit in the 70S ribosome.

Its function is as follows. Located at the top of the head of the 30S subunit, it contacts several helices of the 16S rRNA. In the 70S ribosome it contacts the 23S rRNA (bridge B1a) and protein L5 of the 50S subunit (bridge B1b), connecting the 2 subunits; these bridges are implicated in subunit movement. Contacts the tRNAs in the A and P-sites. The sequence is that of Small ribosomal subunit protein uS13 from Corynebacterium glutamicum (strain ATCC 13032 / DSM 20300 / JCM 1318 / BCRC 11384 / CCUG 27702 / LMG 3730 / NBRC 12168 / NCIMB 10025 / NRRL B-2784 / 534).